The following is a 545-amino-acid chain: Sulfite oxidase, mitochondrial (545 aa).

The transit peptide at 1–79 (MLLLHRAVVL…YQDHRCRAAQ (79 aa)) directs the protein to the mitochondrion. Residues 82–161 (THIYTKEEVS…LAQYKIGELN (80 aa)) enclose the Cytochrome b5 heme-binding domain. His118 lines the heme b pocket. At Ser123 the chain carries Phosphoserine. Residues His143, Gln145, and His147 each contribute to the heme b site. Residues 165 to 174 (KVAPTVETSD) form a hinge region. Positions 175-401 (PYADDPVRHP…YSHWQRRDYK (227 aa)) are moco domain. Mo-molybdopterin contacts are provided by residues 215–219 (FTRNH), Cys264, Asp322, His361, Arg366, and 377–379 (HVK). Residues 402–538 (GFSPSVDWET…RGVLSNAWHR (137 aa)) form a homodimerization region.

In terms of assembly, homodimer. Heme b serves as cofactor. Mo-molybdopterin is required as a cofactor.

The protein resides in the mitochondrion intermembrane space. It carries out the reaction sulfite + O2 + H2O = sulfate + H2O2. Its pathway is energy metabolism; sulfur metabolism. In terms of biological role, catalyzes the oxidation of sulfite to sulfate, the terminal reaction in the oxidative degradation of sulfur-containing amino acids. This is Sulfite oxidase, mitochondrial (SUOX) from Homo sapiens (Human).